Reading from the N-terminus, the 176-residue chain is MILSDRDIAWYIEKGLLRIDPLLDDTIRENGVDLRLDSEFCRFNPDAPELDTRKPFNREIYYNCVKVDPEQGFTVKPYEHVLATTMETVCLPDDLVGLVNVRSTFARYGIFVPPTVIDAGFCGQITIEIIGSAYPVRLYPGQRFLHVVFVRTTSPVANPYHGKYQGQRGVTPPRPD.

Residues 102–107 (RSTFAR) and D118 each bind dCTP. E128 acts as the Proton donor/acceptor in catalysis. DCTP is bound by residues Y160 and Q167.

It belongs to the dCTP deaminase family. In terms of assembly, homotrimer.

The enzyme catalyses dCTP + H2O + H(+) = dUTP + NH4(+). It participates in pyrimidine metabolism; dUMP biosynthesis; dUMP from dCTP (dUTP route): step 1/2. Functionally, catalyzes the deamination of dCTP to dUTP. The polypeptide is dCTP deaminase (Hyperthermus butylicus (strain DSM 5456 / JCM 9403 / PLM1-5)).